A 320-amino-acid chain; its full sequence is Ribosomal RNA small subunit methyltransferase H (320 aa).

Residues 36 to 38, D56, F82, D103, and Q110 each bind S-adenosyl-L-methionine; that span reads GGH.

It belongs to the methyltransferase superfamily. RsmH family.

The protein localises to the cytoplasm. The enzyme catalyses cytidine(1402) in 16S rRNA + S-adenosyl-L-methionine = N(4)-methylcytidine(1402) in 16S rRNA + S-adenosyl-L-homocysteine + H(+). Specifically methylates the N4 position of cytidine in position 1402 (C1402) of 16S rRNA. This chain is Ribosomal RNA small subunit methyltransferase H, found in Chromobacterium violaceum (strain ATCC 12472 / DSM 30191 / JCM 1249 / CCUG 213 / NBRC 12614 / NCIMB 9131 / NCTC 9757 / MK).